A 166-amino-acid chain; its full sequence is Large ribosomal subunit protein uL10 (166 aa).

This sequence belongs to the universal ribosomal protein uL10 family. In terms of assembly, part of the ribosomal stalk of the 50S ribosomal subunit. The N-terminus interacts with L11 and the large rRNA to form the base of the stalk. The C-terminus forms an elongated spine to which L12 dimers bind in a sequential fashion forming a multimeric L10(L12)X complex.

Its function is as follows. Forms part of the ribosomal stalk, playing a central role in the interaction of the ribosome with GTP-bound translation factors. The chain is Large ribosomal subunit protein uL10 from Marinomonas sp. (strain MWYL1).